The sequence spans 347 residues: uncharacterized protein (347 aa).

Over 1–44 (MWNPKKKSEALAKFKSFPYPKPGTSNVLDSKEGDTRRKYFTKTH) the chain is Cytoplasmic. Residues 45-62 (LHRLFVFVVLLLCSGYFL) traverse the membrane as a helical; Signal-anchor for type II membrane protein segment. Residues 63 to 347 (KHTLLTRPKE…RGWRKLVPFL (285 aa)) are Lumenal-facing.

This sequence belongs to the glycosyltransferase 34 family.

It is found in the endoplasmic reticulum membrane. This is an uncharacterized protein from Schizosaccharomyces pombe (strain 972 / ATCC 24843) (Fission yeast).